We begin with the raw amino-acid sequence, 173 residues long: Large ribosomal subunit protein bL9 (173 aa).

The protein belongs to the bacterial ribosomal protein bL9 family.

Its function is as follows. Binds to the 23S rRNA. This Chlamydia felis (strain Fe/C-56) (Chlamydophila felis) protein is Large ribosomal subunit protein bL9.